A 509-amino-acid polypeptide reads, in one-letter code: Poly(A) RNA polymerase GLD2-B (509 aa).

Residues 88-125 (PGSPPSSFQNRKRRSDEGNSPYDVKRQRFQSPQEQTVN) form a disordered region. Residues 116 to 125 (FQSPQEQTVN) show a composition bias toward polar residues. Positions 240 and 242 each coordinate Mg(2+). Residues 409-462 (LGDLLLGFLKYFAVEFDWSKDIISLREAKALPRTDDYEWRNKYICVEEPFDGSN) form the PAP-associated domain.

Belongs to the DNA polymerase type-B-like family. GLD2 subfamily. Component of a complex at least composed of cpeb1, cpsf1, tent2/gld2, pabpc1/ePAB, parn and sympk. Following oocyte maturation, parn is expelled from the complex. Interacts with rbfox2. Interacts with sympk. The cofactor is Mg(2+). Mn(2+) serves as cofactor.

The protein localises to the cytoplasm. The enzyme catalyses RNA(n) + ATP = RNA(n)-3'-adenine ribonucleotide + diphosphate. Cytoplasmic poly(A) RNA polymerase that adds successive AMP monomers to the 3'-end of specific RNAs, forming a poly(A) tail. In contrast to the canonical nuclear poly(A) RNA polymerase, it only adds poly(A) to selected cytoplasmic mRNAs during oocyte maturation. Plays a central role during oocyte maturation by mediating polyadenylation of dormant mRNAs, which contain 5'AAUAAA-3' sequence in their 3'-UTR. In immature oocytes, polyadenylation of poly(A) tails is counteracted by the ribonuclease parn. During maturation parn is excluded from the ribonucleoprotein complex, allowing poly(A) elongation and activation of mRNAs. May not play a role in replication-dependent histone mRNA degradation. The sequence is that of Poly(A) RNA polymerase GLD2-B from Xenopus laevis (African clawed frog).